A 166-amino-acid chain; its full sequence is Ribosome maturation factor RimP (166 aa).

This sequence belongs to the RimP family.

The protein localises to the cytoplasm. In terms of biological role, required for maturation of 30S ribosomal subunits. In Psychrobacter cryohalolentis (strain ATCC BAA-1226 / DSM 17306 / VKM B-2378 / K5), this protein is Ribosome maturation factor RimP.